Consider the following 361-residue polypeptide: Zygote arrest protein 1 (361 aa).

2 disordered regions span residues 68 to 129 (GPRP…PRSW) and 142 to 252 (GLSS…EQDK). Residues 116-128 (PRSPARAGRPPRS) show a composition bias toward low complexity. Phosphothreonine is present on Thr-155. Over residues 238-252 (ASRDRASPQSTEQDK) the composition is skewed to basic and acidic residues. A 3CxxC-type zinc finger spans residues 263–346 (KYGYYHCKDC…RQDLCGRCKD (84 aa)).

Belongs to the ZAR1 family. Interacts with YBX2. In terms of processing, phosphorylation by CDK1 does not regulate formation of MARDO (mitochondria-associated ribonucleoprotein domain) membraneless compartment. Ubiquitinated and degradaded by the proteasome during oocyte meiotic maturation, leading to MARDO (mitochondria-associated ribonucleoprotein domain) membraneless compartment dissolution.

It localises to the cytoplasm. It is found in the cytoplasmic ribonucleoprotein granule. Its function is as follows. mRNA-binding protein that mediates formation of MARDO (mitochondria-associated ribonucleoprotein domain), a membraneless compartment that stores maternal mRNAs in oocytes. MARDO assembly around mitochondria is directed by an increase in mitochondrial membrane potential during oocyte growth. Promotes formation of MARDO phase-separated membraneless compartment by undergoing liquid-liquid phase separation upon binding to maternal mRNAs. Binds to the 3'-UTR of maternal mRNAs. Maternal mRNAs stored in the MARDO are translationally repressed. Essential for female fertility and oocyte-to-embryo transition by coordinating maternal mRNA storage, translation and degradation. This is Zygote arrest protein 1 from Rattus norvegicus (Rat).